Consider the following 433-residue polypeptide: Shikimate O-hydroxycinnamoyltransferase (433 aa).

The active-site Proton acceptor is histidine 153. Residues 252 to 255 (SSYE), 284 to 290 (DGRSRLR), and 370 to 373 (SWVR) each bind 4-coumaroyl-CoA. The Proton acceptor role is filled by aspartate 380.

The protein belongs to the plant acyltransferase family.

It catalyses the reaction shikimate + 4-coumaroyl-CoA = trans-4-coumaroylshikimate + CoA. Its function is as follows. Acyltransferase involved in the biosynthesis of lignin. Accepts caffeoyl-CoA and p-coumaroyl-CoA as substrates and transfers the acyl group on both shikimate and quinate acceptors. The polypeptide is Shikimate O-hydroxycinnamoyltransferase (HST) (Arabidopsis thaliana (Mouse-ear cress)).